The following is a 428-amino-acid chain: 3-phosphoshikimate 1-carboxyvinyltransferase (428 aa).

3-phosphoshikimate-binding residues include lysine 20, serine 21, and arginine 25. Lysine 20 lines the phosphoenolpyruvate pocket. The phosphoenolpyruvate site is built by glycine 92 and arginine 120. Residues serine 166, glutamine 168, aspartate 314, and lysine 341 each coordinate 3-phosphoshikimate. Phosphoenolpyruvate is bound at residue glutamine 168. The active-site Proton acceptor is the aspartate 314. Phosphoenolpyruvate contacts are provided by arginine 345 and arginine 387.

The protein belongs to the EPSP synthase family. As to quaternary structure, monomer.

It is found in the cytoplasm. It catalyses the reaction 3-phosphoshikimate + phosphoenolpyruvate = 5-O-(1-carboxyvinyl)-3-phosphoshikimate + phosphate. It participates in metabolic intermediate biosynthesis; chorismate biosynthesis; chorismate from D-erythrose 4-phosphate and phosphoenolpyruvate: step 6/7. In terms of biological role, catalyzes the transfer of the enolpyruvyl moiety of phosphoenolpyruvate (PEP) to the 5-hydroxyl of shikimate-3-phosphate (S3P) to produce enolpyruvyl shikimate-3-phosphate and inorganic phosphate. This is 3-phosphoshikimate 1-carboxyvinyltransferase from Listeria monocytogenes serotype 4b (strain CLIP80459).